Reading from the N-terminus, the 353-residue chain is Phospho-N-acetylmuramoyl-pentapeptide-transferase (353 aa).

A run of 10 helical transmembrane segments spans residues 13–33, 66–86, 88–108, 130–150, 162–182, 193–213, 229–249, 256–276, 281–301, and 330–350; these read ILGY…FFTL, TPTM…LISI, FSNL…IIGF, LILQ…LSDF, PLFD…IATS, GLAT…IYIT, IGEV…FLWY, VFMG…LAII, ILLL…ILQV, and KIIV…LITL.

This sequence belongs to the glycosyltransferase 4 family. MraY subfamily. It depends on Mg(2+) as a cofactor.

The protein localises to the cell inner membrane. The enzyme catalyses UDP-N-acetyl-alpha-D-muramoyl-L-alanyl-gamma-D-glutamyl-meso-2,6-diaminopimeloyl-D-alanyl-D-alanine + di-trans,octa-cis-undecaprenyl phosphate = di-trans,octa-cis-undecaprenyl diphospho-N-acetyl-alpha-D-muramoyl-L-alanyl-D-glutamyl-meso-2,6-diaminopimeloyl-D-alanyl-D-alanine + UMP. It functions in the pathway cell wall biogenesis; peptidoglycan biosynthesis. Catalyzes the initial step of the lipid cycle reactions in the biosynthesis of the cell wall peptidoglycan: transfers peptidoglycan precursor phospho-MurNAc-pentapeptide from UDP-MurNAc-pentapeptide onto the lipid carrier undecaprenyl phosphate, yielding undecaprenyl-pyrophosphoryl-MurNAc-pentapeptide, known as lipid I. The sequence is that of Phospho-N-acetylmuramoyl-pentapeptide-transferase from Sulfurimonas denitrificans (strain ATCC 33889 / DSM 1251) (Thiomicrospira denitrificans (strain ATCC 33889 / DSM 1251)).